A 313-amino-acid polypeptide reads, in one-letter code: Putative serine protease 29 (313 aa).

Pro residues predominate over residues 1–22 (MPTTPDPGSEPPARTPRPPPLT). The interval 1–27 (MPTTPDPGSEPPARTPRPPPLTPGLSP) is disordered. The region spanning 68–310 (IVGGHNAPPG…YVPWILQQVG (243 aa)) is the Peptidase S1 domain. Residues Cys-99 and Cys-115 are joined by a disulfide bond. The Charge relay system role is filled by His-114. Asn-143 is a glycosylation site (N-linked (GlcNAc...) asparagine). Asp-161 acts as the Charge relay system in catalysis. Intrachain disulfides connect Cys-193/Cys-268, Cys-226/Cys-249, and Cys-258/Cys-286. The active-site Charge relay system is the Ser-262.

It belongs to the peptidase S1 family.

The protein resides in the secreted. This is Putative serine protease 29 (PRSS29P) from Homo sapiens (Human).